The following is a 323-amino-acid chain: MGLFDRGVQMLLTTVGAFAAFSLMTIAVGTDYWLYSRGVCKTKSVSENETSKKNEEVMTHSGLWRTCCLEGNFKGLCKQIDHFPEDADYEADTAEYFLRAVRASSIFPILSVILLFMGGLCIAASEFYKTRHNIILSAGIFFVSAGLSNIIGIIVYISANAGDPSKSDSKKNSYSYGWSFYFGALSFIIAEMVGVLAVHMFIDRHKQLRATARATDYLQASAITRIPSYRYRYQRRSRSSSRSTEPSHSRDASPVGIKGFNTLPSTEISMYTLSRDPLKAATTPTATYNSDRDNSFLQVHNCIQKENKDSLHSNTANRRTTPV.

Residues M10–T30 traverse the membrane as a helical segment. N48 carries an N-linked (GlcNAc...) asparagine glycan. The next 3 helical transmembrane spans lie at S104–A124, I134–I154, and F182–I202. Residues Y233–N261 are disordered. Position 253 is a phosphoserine (S253). Y271 carries the phosphotyrosine modification. T321 is modified (phosphothreonine).

The protein belongs to the PMP-22/EMP/MP20 family. CACNG subfamily. In terms of assembly, the L-type calcium channel is composed of five subunits: alpha-1, alpha-2/delta, beta and gamma. Interacts with the PDZ domains of DLG4/PSD-95 and DLG1/SAP97. May interact with GOPC. Acts as an auxiliary subunit for AMPA-selective glutamate receptors (AMPARs). Found in a complex with GRIA1, GRIA2, GRIA3, GRIA4, CNIH2, CNIH3, CACNG3, CACNG4, CACNG5, CACNG7 and CACNG8. Interacts with GRIA1 and GRIA2. Interacts with MPP2. Post-translationally, phosphorylation of Thr-321 impairs interaction with DLG1 and DLG4. Brain.

It is found in the membrane. It localises to the synapse. The protein localises to the synaptosome. In terms of biological role, regulates the trafficking and gating properties of AMPA-selective glutamate receptors (AMPARs). Promotes their targeting to the cell membrane and synapses and modulates their gating properties by slowing their rates of activation, deactivation and desensitization. Does not show subunit-specific AMPA receptor regulation and regulates all AMPAR subunits. Thought to stabilize the calcium channel in an inactivated (closed) state. The polypeptide is Voltage-dependent calcium channel gamma-2 subunit (CACNG2) (Homo sapiens (Human)).